The sequence spans 499 residues: Cytochrome P450 710A2 (499 aa).

Residues 5 to 25 (VSIFASLAPYLVSALLLFFLI) traverse the membrane as a helical segment. A heme-binding site is contributed by C439.

The protein belongs to the cytochrome P450 family. Requires heme as cofactor. In terms of tissue distribution, expressed in the vascular tissues of roots, shoots, stems and leaves. Expressed in root tips, carpes, siliques and seeds.

The protein resides in the membrane. It catalyses the reaction 5-dehydroepisterol + NADPH + O2 + H(+) = ergosta-5,7,22,24(28)-tetraen-3beta-ol + NADP(+) + 2 H2O. The protein operates within steroid biosynthesis; sterol biosynthesis. Its function is as follows. Required to form the C-22 double bond in the sterol side chain. Possesses in vitro C-22 desaturase activity toward 24-epi-campesterol and beta-sitosterol and produces brassicasterol and stigmasterol, respectively. No activity with campesterol. The protein is Cytochrome P450 710A2 of Arabidopsis thaliana (Mouse-ear cress).